Consider the following 473-residue polypeptide: ATP synthase subunit beta, chloroplastic (473 aa).

172–179 (GGAGVGKT) lines the ATP pocket.

Belongs to the ATPase alpha/beta chains family. F-type ATPases have 2 components, CF(1) - the catalytic core - and CF(0) - the membrane proton channel. CF(1) has five subunits: alpha(3), beta(3), gamma(1), delta(1), epsilon(1). CF(0) has four main subunits: a(1), b(1), b'(1) and c(9-12).

The protein resides in the plastid. It localises to the chloroplast thylakoid membrane. The enzyme catalyses ATP + H2O + 4 H(+)(in) = ADP + phosphate + 5 H(+)(out). Produces ATP from ADP in the presence of a proton gradient across the membrane. The catalytic sites are hosted primarily by the beta subunits. This chain is ATP synthase subunit beta, chloroplastic, found in Equisetum arvense (Field horsetail).